The following is a 182-amino-acid chain: Large ribosomal subunit protein uL10 (182 aa).

The protein belongs to the universal ribosomal protein uL10 family. Part of the ribosomal stalk of the 50S ribosomal subunit. The N-terminus interacts with L11 and the large rRNA to form the base of the stalk. The C-terminus forms an elongated spine to which L12 dimers bind in a sequential fashion forming a multimeric L10(L12)X complex.

Forms part of the ribosomal stalk, playing a central role in the interaction of the ribosome with GTP-bound translation factors. The sequence is that of Large ribosomal subunit protein uL10 from Koribacter versatilis (strain Ellin345).